A 1179-amino-acid chain; its full sequence is MLYQNITNNSCINQALELYHKYCYDKTTYPDQIHTITKALQLDSSSFTAVLLHENIQHLNLEDYNHFNNNIIYLVDVINKLSTIHYKPYAEQYIHFHELLLTINPKLQETAILTSLVPLLHKVSIFNLEYNNTNAQHISEIITNCYIPYLLSYTAHNDLAYLLQDLCFKIQYPEERNRILHYMYWLYPDIDNIIHNIEQQFGNIFRKLNIKASLSYRIKSPYSIWIKTLVKDIHITALNDILAFRAIVPNKKACYDVSKLIHLHYNTITSQFVDYIRYPKNNGYQSIHLVISGGNKGNIELQIRSTTMHRQTQYGSAHHTYKVNKYYVSRTNNNVSVVLFNITLSYSNRILSVYVSIVTITSTINNNLYTDYNTIPSFTQYTQHSTNFVDNDITTCTLSRTTTPEYITYYNNNLSLLIKDTNTIPYNFFLNINLNLSNTVEYKLVPLAVVQIPASNLLFEHNSVFINITYKPILAECAFPATITYTKRHEDSNIRSIFKLFEHNSVFINITYKPILAECAFPATITYTKRHEDSNIRSIFKPPSPTYNTLLATINDKVVLEQYGQKEFLSTTINTNITQMLPIITLLVDPSELNKRINDISDSNKDQLLRLGLQLGCVESVPLLITHGANPNATNCHGVISLHCAAKNGNLDLAKLLAKNGADVNAKTDNGETVLHYAVKSGNLHLVKWLIENQANIHAKTDNGETVLHYAVSFNNSDLVYLLIAYGADVNAKTDNGLTALHYAVYDGNLDLVSLLISHGADVNAKTNSGETILYSAVDYGSPDLVYLLIAYGADVNAKTDNGETVLHYAVESGNLDLVSLLIHNGANVNNAKTILHFAAKSGNLNLVNWLIKNKADIHAKTNSGETILHFAAESGNLNLVNWLIKNKADIHAKTNSGETILHFAAKSGNLNLVNWLIKNKADIHAKTNSGETILHFAAKSGNLNLVNWLIKNKADIHAKTNSGETILHFAAESGNLNLVSLLIHNGTDINTKTDDGLTALHYAVESGNLNLVSLLIHKGIDVNAKTNSGETILHFAVDLGSLDLVSLLMVRGADVNAKTDDGLTALHYAVESDNLALVSLLMVYGADVNAKNNSGETPLHYAVIFNSLDLVSLLIHNGADINTKNNSGETVLNSIMEFNNCNILKSFILGGADINLETMLPDDQTDSIINLCGDLRIS.

ANK repeat units follow at residues 282–311, 604–633, 637–666, 670–699, 703–732, 736–765, 769–798, 802–831, 833–860, 864–893, 897–926, 930–959, 963–992, 996–1025, 1029–1058, 1062–1091, 1095–1124, and 1128–1157; these read NGYQ…MHRQ, NKDQ…NPNA, HGVI…DVNA, NGET…NIHA, NGET…DVNA, NGLT…DVNA, SGET…DVNA, NGET…NVNN, KTIL…DIHA, SGET…DIHA, SGET…DINT, DGLT…DVNA, and SGET…DINL.

This Rickettsia felis (strain ATCC VR-1525 / URRWXCal2) (Rickettsia azadi) protein is Putative ankyrin repeat protein RF_0381.